Consider the following 748-residue polypeptide: Protein REPRESSOR OF SILENCING 3 (748 aa).

The RRM domain occupies 10-86 (VRLHVGGLGE…GRLRLEKAKE (77 aa)). 4 disordered regions span residues 244 to 318 (KSIL…QSID), 350 to 531 (GSSK…VSDT), 579 to 600 (VDEE…GGSS), and 729 to 748 (EWAK…NSEE). Residues 266–288 (THPSKNRQTISLEETGRQESSQA) are compositionally biased toward polar residues. Positions 294–314 (KPSEVVPDKSSDEPSRTKDLE) are enriched in basic and acidic residues. Positions 373-382 (LKKKTKRKRV) are enriched in basic residues. Composition is skewed to acidic residues over residues 403 to 416 (DTMA…DSDA), 439 to 472 (DDSD…DAVE), and 491 to 518 (ESDD…DVGS). Residues 520–531 (DSGSLADTVSDT) show a composition bias toward polar residues.

Ubiquitously expressed.

The protein localises to the nucleus. It localises to the nucleolus. Its subcellular location is the nucleoplasm. Its function is as follows. RNA-binding protein required for DNA demethylation and to eluviate siRNA-mediated transcriptional gene silencing (TGS), probably by guiding ROS1. Can bind specifically single stranded G-rich RNAs of 21-, 24- or 26-nt corresponding to promoter sequence of target genes; this interaction directs demethylation of target sequences. The protein is Protein REPRESSOR OF SILENCING 3 of Arabidopsis thaliana (Mouse-ear cress).